The chain runs to 318 residues: Dual specificity protein phosphatase 2 (318 aa).

The region spanning 27–148 is the Rhodanese domain; the sequence is EAERTLLLDC…FQTYCPDLCS (122 aa). In terms of domain architecture, Tyrosine-protein phosphatase spans 176 to 317; it reads GPVEILPYLY…LLQLETQVLC (142 aa). Catalysis depends on Cys-261, which acts as the Phosphocysteine intermediate.

It belongs to the protein-tyrosine phosphatase family. Non-receptor class dual specificity subfamily. In terms of assembly, interacts with MAPK14; this interaction does not lead to catalytic activation of DUSP2 and dephosphrylation of MAPK14. As to expression, in hematopoietic tissues such as spleen and thymus.

It localises to the nucleus. It catalyses the reaction O-phospho-L-tyrosyl-[protein] + H2O = L-tyrosyl-[protein] + phosphate. The enzyme catalyses O-phospho-L-threonyl-[protein] + H2O = L-threonyl-[protein] + phosphate. Its function is as follows. Dephosphorylates both phosphorylated Thr and Tyr residues in MAPK1, and dephosphorylation of phosphotyrosine is slightly faster than that of phosphothreonine. Can dephosphorylate MAPK1. The sequence is that of Dual specificity protein phosphatase 2 from Mus musculus (Mouse).